The primary structure comprises 284 residues: Bifunctional protein FolD (284 aa).

NADP(+) is bound by residues 165-167 (GRS), S190, and V231.

It belongs to the tetrahydrofolate dehydrogenase/cyclohydrolase family. Homodimer.

It catalyses the reaction (6R)-5,10-methylene-5,6,7,8-tetrahydrofolate + NADP(+) = (6R)-5,10-methenyltetrahydrofolate + NADPH. The enzyme catalyses (6R)-5,10-methenyltetrahydrofolate + H2O = (6R)-10-formyltetrahydrofolate + H(+). It participates in one-carbon metabolism; tetrahydrofolate interconversion. Its function is as follows. Catalyzes the oxidation of 5,10-methylenetetrahydrofolate to 5,10-methenyltetrahydrofolate and then the hydrolysis of 5,10-methenyltetrahydrofolate to 10-formyltetrahydrofolate. The chain is Bifunctional protein FolD from Natranaerobius thermophilus (strain ATCC BAA-1301 / DSM 18059 / JW/NM-WN-LF).